We begin with the raw amino-acid sequence, 149 residues long: Lipoprotein MlpF (149 aa).

Residues 1–17 form the signal peptide; it reads MKIINILFCLFLLLLNS. A lipid anchor (N-palmitoyl cysteine) is attached at C18. C18 carries S-diacylglycerol cysteine lipidation. The tract at residues 26 to 58 is disordered; it reads LKNNAQQTKSRGKRDLTQKEATPEKPKSKEELL. The segment covering 38-58 has biased composition (basic and acidic residues); it reads KRDLTQKEATPEKPKSKEELL.

Belongs to the Multicopy lipoprotein (Mlp) family.

It is found in the cell outer membrane. In terms of biological role, an outer membrane protein that may participate in pathogenesis. Some human Lyme disease patients have antibodies against this protein. The Mlp proteins probably undergo intragenic recombination, generating new alleles. The sequence is that of Lipoprotein MlpF from Borreliella burgdorferi (strain ATCC 35210 / DSM 4680 / CIP 102532 / B31) (Borrelia burgdorferi).